The sequence spans 240 residues: Ubiquinone biosynthesis O-methyltransferase (240 aa).

S-adenosyl-L-methionine contacts are provided by Arg44, Gly64, Asp85, and Met129.

This sequence belongs to the methyltransferase superfamily. UbiG/COQ3 family.

It catalyses the reaction a 3-demethylubiquinol + S-adenosyl-L-methionine = a ubiquinol + S-adenosyl-L-homocysteine + H(+). The enzyme catalyses a 3-(all-trans-polyprenyl)benzene-1,2-diol + S-adenosyl-L-methionine = a 2-methoxy-6-(all-trans-polyprenyl)phenol + S-adenosyl-L-homocysteine + H(+). The protein operates within cofactor biosynthesis; ubiquinone biosynthesis. In terms of biological role, O-methyltransferase that catalyzes the 2 O-methylation steps in the ubiquinone biosynthetic pathway. The sequence is that of Ubiquinone biosynthesis O-methyltransferase from Escherichia coli O6:K15:H31 (strain 536 / UPEC).